A 486-amino-acid chain; its full sequence is Glutamyl-tRNA(Gln) amidotransferase subunit A (486 aa).

Residues Lys75 and Ser150 each act as charge relay system in the active site. Residue Ser174 is the Acyl-ester intermediate of the active site.

Belongs to the amidase family. GatA subfamily. As to quaternary structure, heterotrimer of A, B and C subunits.

The enzyme catalyses L-glutamyl-tRNA(Gln) + L-glutamine + ATP + H2O = L-glutaminyl-tRNA(Gln) + L-glutamate + ADP + phosphate + H(+). In terms of biological role, allows the formation of correctly charged Gln-tRNA(Gln) through the transamidation of misacylated Glu-tRNA(Gln) in organisms which lack glutaminyl-tRNA synthetase. The reaction takes place in the presence of glutamine and ATP through an activated gamma-phospho-Glu-tRNA(Gln). This Nostoc sp. (strain PCC 7120 / SAG 25.82 / UTEX 2576) protein is Glutamyl-tRNA(Gln) amidotransferase subunit A.